The primary structure comprises 194 residues: Endonuclease V (194 aa).

Residues Asp31 and Glu95 each contribute to the Mg(2+) site.

This sequence belongs to the endonuclease V family. Mg(2+) is required as a cofactor.

It is found in the cytoplasm. It carries out the reaction Endonucleolytic cleavage at apurinic or apyrimidinic sites to products with a 5'-phosphate.. DNA repair enzyme involved in the repair of deaminated bases. Selectively cleaves double-stranded DNA at the second phosphodiester bond 3' to a deoxyinosine leaving behind the intact lesion on the nicked DNA. The sequence is that of Endonuclease V from Pyrococcus abyssi (strain GE5 / Orsay).